Reading from the N-terminus, the 204-residue chain is ATP-dependent Clp protease proteolytic subunit 1 (204 aa).

S97 acts as the Nucleophile in catalysis. Residue H122 is part of the active site.

The protein belongs to the peptidase S14 family. In terms of assembly, fourteen ClpP subunits assemble into 2 heptameric rings which stack back to back to give a disk-like structure with a central cavity, resembling the structure of eukaryotic proteasomes.

It localises to the cytoplasm. It catalyses the reaction Hydrolysis of proteins to small peptides in the presence of ATP and magnesium. alpha-casein is the usual test substrate. In the absence of ATP, only oligopeptides shorter than five residues are hydrolyzed (such as succinyl-Leu-Tyr-|-NHMec, and Leu-Tyr-Leu-|-Tyr-Trp, in which cleavage of the -Tyr-|-Leu- and -Tyr-|-Trp bonds also occurs).. Functionally, cleaves peptides in various proteins in a process that requires ATP hydrolysis. Has a chymotrypsin-like activity. Plays a major role in the degradation of misfolded proteins. The chain is ATP-dependent Clp protease proteolytic subunit 1 from Nostoc sp. (strain PCC 7120 / SAG 25.82 / UTEX 2576).